The primary structure comprises 149 residues: Large ribosomal subunit protein uL15 (149 aa).

Composition is skewed to basic residues over residues 1–14 (MPTH…HRGH) and 21–30 (RVGKHRKHPG). The tract at residues 1 to 42 (MPTHLSKTRKHRGHVSAGHGRVGKHRKHPGGRGLAGGQHHHR) is disordered.

It belongs to the universal ribosomal protein uL15 family.

The sequence is that of Large ribosomal subunit protein uL15 from Blumeria hordei (Barley powdery mildew).